Here is a 126-residue protein sequence, read N- to C-terminus: Histone H2B type 1-H (126 aa).

The segment covering 1-12 has biased composition (low complexity); sequence MPDPAKSAPAPK. Residues 1 to 36 are disordered; it reads MPDPAKSAPAPKKGSKKAVTKAQKKDGKKRKRSRKE. P2 bears the N-acetylproline mark. K6 carries the N6-(2-hydroxyisobutyryl)lysine; alternate modification. At K6 the chain carries N6-(beta-hydroxybutyryl)lysine; alternate. The residue at position 6 (K6) is an N6-acetyllysine; alternate. At K6 the chain carries N6-butyryllysine; alternate. K6 is modified (N6-crotonyllysine; alternate). The residue at position 6 (K6) is an N6-lactoyllysine; alternate. A Glycyl lysine isopeptide (Lys-Gly) (interchain with G-Cter in SUMO2); alternate cross-link involves residue K6. ADP-ribosylserine is present on S7. K12 is subject to N6-(beta-hydroxybutyryl)lysine; alternate. N6-acetyllysine; alternate occurs at positions 12 and 13. An N6-crotonyllysine; alternate mark is found at K12 and K13. An N6-lactoyllysine; alternate modification is found at K12. K13 is subject to N6-(2-hydroxyisobutyryl)lysine; alternate. At S15 the chain carries Phosphoserine; by STK4/MST1. Residues K16, K17, K21, and K24 each carry the N6-acetyllysine; alternate modification. N6-crotonyllysine; alternate occurs at positions 16, 17, 21, and 24. An N6-lactoyllysine; alternate mark is found at K16, K17, K21, and K24. 2 positions are modified to N6-(beta-hydroxybutyryl)lysine; alternate: K17 and K21. At K17 the chain carries N6-glutaryllysine; alternate. Residues K21 and K24 each carry the N6-(2-hydroxyisobutyryl)lysine; alternate modification. N6-butyryllysine; alternate is present on K21. A Glycyl lysine isopeptide (Lys-Gly) (interchain with G-Cter in SUMO2); alternate cross-link involves residue K21. K25 is modified (N6-(2-hydroxyisobutyryl)lysine). The residue at position 35 (K35) is an N6-(2-hydroxyisobutyryl)lysine; alternate. K35 carries the post-translational modification N6-(beta-hydroxybutyryl)lysine; alternate. K35 is subject to N6-crotonyllysine; alternate. Residue K35 is modified to N6-glutaryllysine; alternate. An N6-succinyllysine; alternate modification is found at K35. A Glycyl lysine isopeptide (Lys-Gly) (interchain with G-Cter in ubiquitin); alternate cross-link involves residue K35. At E36 the chain carries PolyADP-ribosyl glutamic acid. S37 carries the post-translational modification Phosphoserine; by AMPK. An N6-(2-hydroxyisobutyryl)lysine; alternate mark is found at K44, K47, and K58. Residue K44 is modified to N6-lactoyllysine; alternate. N6-glutaryllysine; alternate occurs at positions 44 and 47. K47 carries the N6-methyllysine; alternate modification. K58 is modified (N6,N6-dimethyllysine; alternate). R80 is subject to Dimethylated arginine. At K86 the chain carries N6-(2-hydroxyisobutyryl)lysine; alternate. Position 86 is an N6-(beta-hydroxybutyryl)lysine; alternate (K86). K86 is modified (N6-acetyllysine; alternate). The residue at position 86 (K86) is an N6-lactoyllysine; alternate. The residue at position 86 (K86) is an N6,N6,N6-trimethyllysine; alternate. An omega-N-methylarginine mark is found at R87 and R93. K109 is subject to N6-(2-hydroxyisobutyryl)lysine; alternate. At K109 the chain carries N6-lactoyllysine; alternate. N6-glutaryllysine; alternate is present on K109. The residue at position 109 (K109) is an N6-methyllysine; alternate. O-linked (GlcNAc) serine glycosylation is present at S113. A Phosphothreonine modification is found at T116. Residues K117 and K121 each carry the N6-(2-hydroxyisobutyryl)lysine; alternate modification. N6-(beta-hydroxybutyryl)lysine; alternate occurs at positions 117 and 121. Residues K117 and K121 each carry the N6-lactoyllysine; alternate modification. An N6-glutaryllysine; alternate mark is found at K117 and K121. K117 and K121 each carry N6-succinyllysine; alternate. K117 is subject to N6-malonyllysine; alternate. N6-methylated lysine; alternate is present on K117. K121 participates in a covalent cross-link: Glycyl lysine isopeptide (Lys-Gly) (interchain with G-Cter in ubiquitin); alternate.

The protein belongs to the histone H2B family. The nucleosome is a histone octamer containing two molecules each of H2A, H2B, H3 and H4 assembled in one H3-H4 heterotetramer and two H2A-H2B heterodimers. The octamer wraps approximately 147 bp of DNA. Found in a complex with PPAR9; DTX3L AND STAT1; the interaction is likely to induce DTX3L-mediated ubiquitination of H2BC9/H2BJ. Post-translationally, monoubiquitination at Lys-35 (H2BK34Ub) by the MSL1/MSL2 dimer is required for histone H3 'Lys-4' (H3K4me) and 'Lys-79' (H3K79me) methylation and transcription activation at specific gene loci, such as HOXA9 and MEIS1 loci. Similarly, monoubiquitination at Lys-121 (H2BK120Ub) by the RNF20/40 complex gives a specific tag for epigenetic transcriptional activation and is also prerequisite for histone H3 'Lys-4' and 'Lys-79' methylation. It also functions cooperatively with the FACT dimer to stimulate elongation by RNA polymerase II. H2BK120Ub also acts as a regulator of mRNA splicing: deubiquitination by USP49 is required for efficient cotranscriptional splicing of a large set of exons. Monoubiquitinated by DTX3L upon encephalomyocarditis virus (EMCV)-mediated infection. In terms of processing, phosphorylation at Ser-37 (H2BS36ph) by AMPK in response to stress promotes transcription. Phosphorylated on Ser-15 (H2BS14ph) by STK4/MST1 during apoptosis; which facilitates apoptotic chromatin condensation. Also phosphorylated on Ser-15 in response to DNA double strand breaks (DSBs), and in correlation with somatic hypermutation and immunoglobulin class-switch recombination. GlcNAcylation at Ser-113 promotes monoubiquitination of Lys-121. It fluctuates in response to extracellular glucose, and associates with transcribed genes. Post-translationally, ADP-ribosylated by PARP1 or PARP2 on Ser-7 (H2BS6ADPr) in response to DNA damage. H2BS6ADPr promotes recruitment of CHD1L. Poly ADP-ribosylation on Glu-36 (H2BE35ADPr) by PARP1 regulates adipogenesis: it inhibits phosphorylation at Ser-37 (H2BS36ph), thereby blocking expression of pro-adipogenetic genes. In terms of processing, crotonylation (Kcr) is specifically present in male germ cells and marks testis-specific genes in post-meiotic cells, including X-linked genes that escape sex chromosome inactivation in haploid cells. Crotonylation marks active promoters and enhancers and confers resistance to transcriptional repressors. It is also associated with post-meiotically activated genes on autosomes. Lactylated in macrophages by EP300/P300 by using lactoyl-CoA directly derived from endogenous or exogenous lactate, leading to stimulates gene transcription.

It is found in the nucleus. The protein resides in the chromosome. Functionally, core component of nucleosome. Nucleosomes wrap and compact DNA into chromatin, limiting DNA accessibility to the cellular machineries which require DNA as a template. Histones thereby play a central role in transcription regulation, DNA repair, DNA replication and chromosomal stability. DNA accessibility is regulated via a complex set of post-translational modifications of histones, also called histone code, and nucleosome remodeling. This Homo sapiens (Human) protein is Histone H2B type 1-H.